The primary structure comprises 151 residues: Ribosomal RNA large subunit methyltransferase H (151 aa).

S-adenosyl-L-methionine contacts are provided by residues Gly100 and 119–124 (LSKMTF).

This sequence belongs to the RNA methyltransferase RlmH family. In terms of assembly, homodimer.

It is found in the cytoplasm. The enzyme catalyses pseudouridine(1915) in 23S rRNA + S-adenosyl-L-methionine = N(3)-methylpseudouridine(1915) in 23S rRNA + S-adenosyl-L-homocysteine + H(+). Its function is as follows. Specifically methylates the pseudouridine at position 1915 (m3Psi1915) in 23S rRNA. This Thermotoga sp. (strain RQ2) protein is Ribosomal RNA large subunit methyltransferase H.